A 396-amino-acid chain; its full sequence is Enoyl-[acyl-carrier-protein] reductase [NADH] (396 aa).

Residues 48–53 (GASTGY), 74–75 (FE), 111–112 (DA), and 139–140 (LA) contribute to the NAD(+) site. A substrate-binding site is contributed by Tyr-225. Residue Tyr-235 is the Proton donor of the active site. NAD(+) is bound by residues Lys-244 and 273–275 (VVT).

It belongs to the TER reductase family. As to quaternary structure, monomer.

It catalyses the reaction a 2,3-saturated acyl-[ACP] + NAD(+) = a (2E)-enoyl-[ACP] + NADH + H(+). It participates in lipid metabolism; fatty acid biosynthesis. Functionally, involved in the final reduction of the elongation cycle of fatty acid synthesis (FAS II). Catalyzes the reduction of a carbon-carbon double bond in an enoyl moiety that is covalently linked to an acyl carrier protein (ACP). This Colwellia psychrerythraea (strain 34H / ATCC BAA-681) (Vibrio psychroerythus) protein is Enoyl-[acyl-carrier-protein] reductase [NADH].